The following is a 753-amino-acid chain: 5-methyltetrahydropteroyltriglutamate--homocysteine methyltransferase (753 aa).

5-methyltetrahydropteroyltri-L-glutamate is bound by residues 17-20 (RELK) and Lys-117. L-homocysteine is bound by residues 431 to 433 (IGS) and Glu-484. L-methionine-binding positions include 431–433 (IGS) and Glu-484. 5-methyltetrahydropteroyltri-L-glutamate contacts are provided by residues 515–516 (RC) and Trp-561. Residue Asp-599 participates in L-homocysteine binding. Asp-599 contributes to the L-methionine binding site. Glu-605 serves as a coordination point for 5-methyltetrahydropteroyltri-L-glutamate. Zn(2+) is bound by residues His-641, Cys-643, and Glu-665. Catalysis depends on His-694, which acts as the Proton donor. Cys-726 contributes to the Zn(2+) binding site.

The protein belongs to the vitamin-B12 independent methionine synthase family. Zn(2+) is required as a cofactor.

It catalyses the reaction 5-methyltetrahydropteroyltri-L-glutamate + L-homocysteine = tetrahydropteroyltri-L-glutamate + L-methionine. It functions in the pathway amino-acid biosynthesis; L-methionine biosynthesis via de novo pathway; L-methionine from L-homocysteine (MetE route): step 1/1. Catalyzes the transfer of a methyl group from 5-methyltetrahydrofolate to homocysteine resulting in methionine formation. This is 5-methyltetrahydropteroyltriglutamate--homocysteine methyltransferase from Citrobacter koseri (strain ATCC BAA-895 / CDC 4225-83 / SGSC4696).